A 312-amino-acid polypeptide reads, in one-letter code: Aspartate carbamoyltransferase catalytic subunit (312 aa).

Carbamoyl phosphate is bound by residues arginine 58 and threonine 59. Lysine 86 provides a ligand contact to L-aspartate. Residues arginine 108, histidine 136, and glutamine 139 each coordinate carbamoyl phosphate. Arginine 169 and arginine 223 together coordinate L-aspartate. 2 residues coordinate carbamoyl phosphate: glycine 264 and proline 265.

It belongs to the aspartate/ornithine carbamoyltransferase superfamily. ATCase family. Heterododecamer (2C3:3R2) of six catalytic PyrB chains organized as two trimers (C3), and six regulatory PyrI chains organized as three dimers (R2).

It catalyses the reaction carbamoyl phosphate + L-aspartate = N-carbamoyl-L-aspartate + phosphate + H(+). The protein operates within pyrimidine metabolism; UMP biosynthesis via de novo pathway; (S)-dihydroorotate from bicarbonate: step 2/3. Functionally, catalyzes the condensation of carbamoyl phosphate and aspartate to form carbamoyl aspartate and inorganic phosphate, the committed step in the de novo pyrimidine nucleotide biosynthesis pathway. In Desulfitobacterium hafniense (strain DSM 10664 / DCB-2), this protein is Aspartate carbamoyltransferase catalytic subunit.